The chain runs to 627 residues: 1-deoxy-D-xylulose-5-phosphate synthase (627 aa).

Thiamine diphosphate is bound by residues His-87 and 128–130 (GHS). Asp-159 lines the Mg(2+) pocket. Residues 160-161 (GA), Asn-188, Phe-295, and Glu-375 each bind thiamine diphosphate. Asn-188 provides a ligand contact to Mg(2+).

The protein belongs to the transketolase family. DXPS subfamily. In terms of assembly, homodimer. The cofactor is Mg(2+). Thiamine diphosphate is required as a cofactor.

The enzyme catalyses D-glyceraldehyde 3-phosphate + pyruvate + H(+) = 1-deoxy-D-xylulose 5-phosphate + CO2. The protein operates within metabolic intermediate biosynthesis; 1-deoxy-D-xylulose 5-phosphate biosynthesis; 1-deoxy-D-xylulose 5-phosphate from D-glyceraldehyde 3-phosphate and pyruvate: step 1/1. In terms of biological role, catalyzes the acyloin condensation reaction between C atoms 2 and 3 of pyruvate and glyceraldehyde 3-phosphate to yield 1-deoxy-D-xylulose-5-phosphate (DXP). The protein is 1-deoxy-D-xylulose-5-phosphate synthase of Pseudomonas aeruginosa (strain LESB58).